Here is a 231-residue protein sequence, read N- to C-terminus: Ribose-5-phosphate isomerase A (231 aa).

Residues 31–34 (SGST), 87–90 (DGAD), and 100–103 (KGGG) contribute to the substrate site. The active-site Proton acceptor is the Glu109. Lys127 contributes to the substrate binding site.

It belongs to the ribose 5-phosphate isomerase family. Homodimer.

It catalyses the reaction aldehydo-D-ribose 5-phosphate = D-ribulose 5-phosphate. It participates in carbohydrate degradation; pentose phosphate pathway; D-ribose 5-phosphate from D-ribulose 5-phosphate (non-oxidative stage): step 1/1. Catalyzes the reversible conversion of ribose-5-phosphate to ribulose 5-phosphate. This is Ribose-5-phosphate isomerase A from Chlamydia pneumoniae (Chlamydophila pneumoniae).